Reading from the N-terminus, the 192-residue chain is Ion-translocating oxidoreductase complex subunit B (192 aa).

Residues Met-1–Ser-26 form a hydrophobic region. One can recognise a 4Fe-4S domain in the interval Glu-32 to Val-91. Residues Cys-49, Cys-52, Cys-57, Cys-74, Cys-117, Cys-120, Cys-123, Cys-127, Cys-147, Cys-150, Cys-153, and Cys-157 each coordinate [4Fe-4S] cluster. 4Fe-4S ferredoxin-type domains lie at His-108–Lys-137 and Ala-138–Ile-167.

Belongs to the 4Fe4S bacterial-type ferredoxin family. RnfB subfamily. In terms of assembly, the complex is composed of six subunits: RnfA, RnfB, RnfC, RnfD, RnfE and RnfG. It depends on [4Fe-4S] cluster as a cofactor.

It is found in the cell inner membrane. Part of a membrane-bound complex that couples electron transfer with translocation of ions across the membrane. The polypeptide is Ion-translocating oxidoreductase complex subunit B (Pectobacterium atrosepticum (strain SCRI 1043 / ATCC BAA-672) (Erwinia carotovora subsp. atroseptica)).